The sequence spans 298 residues: 4-hydroxy-tetrahydrodipicolinate synthase (298 aa).

A pyruvate-binding site is contributed by threonine 45. Tyrosine 133 serves as the catalytic Proton donor/acceptor. Residue lysine 161 is the Schiff-base intermediate with substrate of the active site. A pyruvate-binding site is contributed by isoleucine 203.

The protein belongs to the DapA family. As to quaternary structure, homotetramer; dimer of dimers.

It localises to the cytoplasm. It carries out the reaction L-aspartate 4-semialdehyde + pyruvate = (2S,4S)-4-hydroxy-2,3,4,5-tetrahydrodipicolinate + H2O + H(+). The protein operates within amino-acid biosynthesis; L-lysine biosynthesis via DAP pathway; (S)-tetrahydrodipicolinate from L-aspartate: step 3/4. Functionally, catalyzes the condensation of (S)-aspartate-beta-semialdehyde [(S)-ASA] and pyruvate to 4-hydroxy-tetrahydrodipicolinate (HTPA). This Wigglesworthia glossinidia brevipalpis protein is 4-hydroxy-tetrahydrodipicolinate synthase.